The primary structure comprises 225 residues: ATP-dependent Clp protease proteolytic subunit (225 aa).

S126 functions as the Nucleophile in the catalytic mechanism. H151 is a catalytic residue.

Belongs to the peptidase S14 family. Fourteen ClpP subunits assemble into 2 heptameric rings which stack back to back to give a disk-like structure with a central cavity, resembling the structure of eukaryotic proteasomes.

It localises to the cytoplasm. The catalysed reaction is Hydrolysis of proteins to small peptides in the presence of ATP and magnesium. alpha-casein is the usual test substrate. In the absence of ATP, only oligopeptides shorter than five residues are hydrolyzed (such as succinyl-Leu-Tyr-|-NHMec, and Leu-Tyr-Leu-|-Tyr-Trp, in which cleavage of the -Tyr-|-Leu- and -Tyr-|-Trp bonds also occurs).. In terms of biological role, cleaves peptides in various proteins in a process that requires ATP hydrolysis. Has a chymotrypsin-like activity. Plays a major role in the degradation of misfolded proteins. The polypeptide is ATP-dependent Clp protease proteolytic subunit (Psychrobacter arcticus (strain DSM 17307 / VKM B-2377 / 273-4)).